A 256-amino-acid polypeptide reads, in one-letter code: MTLELTPIPCLTDNYAWLWHDTATDTVVVVDVPEAAPVLKVLTDRRWQLHHILITHHHADHIAGVEALAQATGAKVAGAAADAHRLPPLDHPVAPGDVLHLGMEAAQVIAADGHTLGHIAWYLPGAGLLFSGDSLMSWGCGRLFEGTPAQMFDTLTRLAALPPETRVCSGHEYTAANGRFALSLEPGNGRLHDRMDRVTALRLAGEPSLPVTLGEERATNPFLRADDAALRAALGLPGDAAPLAVFTAARARKDRF.

Zn(2+) is bound by residues His56, His58, Asp60, His61, His114, Asp133, and His171.

It belongs to the metallo-beta-lactamase superfamily. Glyoxalase II family. As to quaternary structure, monomer. The cofactor is Zn(2+).

It carries out the reaction an S-(2-hydroxyacyl)glutathione + H2O = a 2-hydroxy carboxylate + glutathione + H(+). Its pathway is secondary metabolite metabolism; methylglyoxal degradation; (R)-lactate from methylglyoxal: step 2/2. Functionally, thiolesterase that catalyzes the hydrolysis of S-D-lactoyl-glutathione to form glutathione and D-lactic acid. The chain is Hydroxyacylglutathione hydrolase from Rhodobacter capsulatus (Rhodopseudomonas capsulata).